The following is a 616-amino-acid chain: MALLQISEPGLSAAPHQRRLAAGIDLGTTNSLVATVRSGQAETLPDHEGRHLLPSVVHYQQQGHTVGYAARDNAAQDTANTISSVKRMMGRSLADIQARYPHLPYRFKASVNGLPMIDTAAGLLNPVRVSADILKALAARASESLSGELDGVVITVPAYFDDAQRQGTKDAARLAGLHVLRLLNEPTAAAIAYGLDSGKEGVIAVYDLGGGTFDISILRLSRGVFEVLATGGDSALGGDDFDHLLADYIREQAGIADRSDNRVQRELLDAAITAKIALSDADTVRVNVAGWQGEITREQFNDLISALVKRTLLACRRALKDAGVEPQDVLEVVMVGGSTRVPLVRERVGEFFGRTPLTAIDPDKVVAIGAAIQADILVGNKPDSEMLLLDVIPLSLGLETMGGLVEKVIPRNTTIPVARAQDFTTFKDGQTAMSIHVMQGERELVQDCRSLARFALRGIPPLPAGGAHIRVTFQVDADGLLSVTAMEKSTGVEASIQVKPSYGLTDSEIASMIKDSMSFAEQDVKARMLAEQKVEAARVLESLTGALTADAALLSAAERQCIDDAAAHLSAVAQGDDVDAIEQAIKNVDKQTQEFAARRMDQSVRRALKGHSVDEV.

This sequence belongs to the heat shock protein 70 family.

Chaperone involved in the maturation of iron-sulfur cluster-containing proteins. Has a low intrinsic ATPase activity which is markedly stimulated by HscB. Involved in the maturation of IscU. In Salmonella paratyphi A (strain ATCC 9150 / SARB42), this protein is Chaperone protein HscA.